A 912-amino-acid polypeptide reads, in one-letter code: Ubiquitin carboxyl-terminal hydrolase 20 (912 aa).

The UBP-type zinc-finger motif lies at 6-111; it reads DLCPHLDSIG…GPAPKFSEQD (106 aa). Residues cysteine 8, histidine 10, cysteine 30, cysteine 33, cysteine 43, cysteine 48, cysteine 53, histidine 60, histidine 64, histidine 70, cysteine 83, and cysteine 86 each coordinate Zn(2+). Residues 101 to 120 are disordered; that stretch reads PGPAPKFSEQDSPPPSHPLK. Phosphoserine occurs at positions 112, 132, and 134. Residues 145–683 form the USP domain; it reads TGMKNLGNSC…EAYVLFYRKS (539 aa). Cysteine 154 (nucleophile) is an active-site residue. Disordered regions lie at residues 258–308 and 322–415; these read LTEA…GSQA and ISEK…ASPV. Position 259 is a phosphothreonine (threonine 259). A compositionally biased stretch (basic and acidic residues) spans 260-280; the sequence is EARDSDSSDTDEKREGDRSPS. Residue serine 306 is modified to Phosphoserine. Basic and acidic residues predominate over residues 322 to 333; it reads ISEKERMKDRKF. Phosphoserine is present on serine 369. Threonine 378 carries the phosphothreonine modification. Phosphoserine occurs at positions 408 and 413. Histidine 641 serves as the catalytic Proton acceptor. 2 consecutive DUSP domains span residues 685-778 and 787-890; these read EEAV…LYVC and ALAK…RQSV.

This sequence belongs to the peptidase C19 family. USP20/USP33 subfamily. As to quaternary structure, interacts with VHL, leading to its ubiquitination and subsequent degradation. Interacts with CCP110. Interacts with DIO2. Interacts with HIF1A. Interacts with ADRB2. Interacts with USP18. In terms of processing, ubiquitinated via a VHL-dependent pathway for proteasomal degradation.

The protein resides in the cytoplasm. It localises to the endoplasmic reticulum. It is found in the perinuclear region. The protein localises to the cytoskeleton. Its subcellular location is the microtubule organizing center. The protein resides in the centrosome. The enzyme catalyses Thiol-dependent hydrolysis of ester, thioester, amide, peptide and isopeptide bonds formed by the C-terminal Gly of ubiquitin (a 76-residue protein attached to proteins as an intracellular targeting signal).. Functionally, deubiquitinating enzyme that plays a role in many cellular processes including autophagy, cellular antiviral response or membrane protein biogenesis. Attenuates TLR4-mediated NF-kappa-B signaling by cooperating with beta-arrestin-2/ARRB2 and inhibiting TRAF6 autoubiquitination. Promotes cellular antiviral responses by deconjugating 'Lys-33' and 'Lys-48'-linked ubiquitination of STING1 leading to its stabilization. Plays an essential role in autophagy induction by regulating the ULK1 stability through deubiquitination of ULK1. Acts as a positive regulator for NF-kappa-B activation by TNF-alpha through deubiquitinating 'Lys-48'-linked polyubiquitination of SQSTM1, leading to its increased stability. Acts as a regulator of G-protein coupled receptor (GPCR) signaling by mediating the deubiquitination beta-2 adrenergic receptor (ADRB2). Plays a central role in ADRB2 recycling and resensitization after prolonged agonist stimulation by constitutively binding ADRB2, mediating deubiquitination of ADRB2 and inhibiting lysosomal trafficking of ADRB2. Upon dissociation, it is probably transferred to the translocated beta-arrestins, possibly leading to beta-arrestins deubiquitination and disengagement from ADRB2. This suggests the existence of a dynamic exchange between the ADRB2 and beta-arrestins. Deubiquitinates DIO2, thereby regulating thyroid hormone regulation. Deubiquitinates HIF1A, leading to stabilize HIF1A and enhance HIF1A-mediated activity. Deubiquitinates MCL1, a pivotal member of the anti-apoptotic Bcl-2 protein family to regulate its stability. Within the endoplasmic reticulum, participates with USP33 in the rescue of post-translationally targeted membrane proteins that are inappropriately ubiquitinated by the cytosolic protein quality control in the cytosol. The sequence is that of Ubiquitin carboxyl-terminal hydrolase 20 (USP20) from Bos taurus (Bovine).